Here is a 33-residue protein sequence, read N- to C-terminus: Brevinin-2Rk (33 aa).

A disulfide bridge connects residues Cys27 and Cys33.

As to expression, expressed by the skin glands.

The protein resides in the secreted. Functionally, antimicrobial peptide. The protein is Brevinin-2Rk of Pelophylax ridibundus (Marsh frog).